The chain runs to 208 residues: Thiamine-phosphate synthase (208 aa).

Residues 37–39 (QVR) and N70 contribute to the 4-amino-2-methyl-5-(diphosphooxymethyl)pyrimidine site. The Mg(2+) site is built by D71 and D90. T109 is a 4-amino-2-methyl-5-(diphosphooxymethyl)pyrimidine binding site. 2-[(2R,5Z)-2-carboxy-4-methylthiazol-5(2H)-ylidene]ethyl phosphate is bound at residue 135–137 (TTS). Residue K138 participates in 4-amino-2-methyl-5-(diphosphooxymethyl)pyrimidine binding. A166 provides a ligand contact to 2-[(2R,5Z)-2-carboxy-4-methylthiazol-5(2H)-ylidene]ethyl phosphate.

Belongs to the thiamine-phosphate synthase family. It depends on Mg(2+) as a cofactor.

It carries out the reaction 2-[(2R,5Z)-2-carboxy-4-methylthiazol-5(2H)-ylidene]ethyl phosphate + 4-amino-2-methyl-5-(diphosphooxymethyl)pyrimidine + 2 H(+) = thiamine phosphate + CO2 + diphosphate. The enzyme catalyses 2-(2-carboxy-4-methylthiazol-5-yl)ethyl phosphate + 4-amino-2-methyl-5-(diphosphooxymethyl)pyrimidine + 2 H(+) = thiamine phosphate + CO2 + diphosphate. The catalysed reaction is 4-methyl-5-(2-phosphooxyethyl)-thiazole + 4-amino-2-methyl-5-(diphosphooxymethyl)pyrimidine + H(+) = thiamine phosphate + diphosphate. It functions in the pathway cofactor biosynthesis; thiamine diphosphate biosynthesis; thiamine phosphate from 4-amino-2-methyl-5-diphosphomethylpyrimidine and 4-methyl-5-(2-phosphoethyl)-thiazole: step 1/1. Functionally, condenses 4-methyl-5-(beta-hydroxyethyl)thiazole monophosphate (THZ-P) and 2-methyl-4-amino-5-hydroxymethyl pyrimidine pyrophosphate (HMP-PP) to form thiamine monophosphate (TMP). The protein is Thiamine-phosphate synthase of Salinispora tropica (strain ATCC BAA-916 / DSM 44818 / JCM 13857 / NBRC 105044 / CNB-440).